A 40-amino-acid chain; its full sequence is Natriuretic peptide TNPd (40 aa).

A disulfide bridge links Cys-9 with Cys-25.

This sequence belongs to the natriuretic peptide family. In terms of tissue distribution, expressed by the venom gland.

It localises to the secreted. Its function is as follows. Snake venom natriuretic peptide that exhibits vasoactive and hypotensive activity. Stimulates cGMP production through the natriuretic peptide receptor 1 (NPR1) with very high potencies for the rat NPR1 (EC(50)=18 nM), and very weak potencies over human NPR1 (30% activation at 10 uM). The polypeptide is Natriuretic peptide TNPd (Oxyuranus microlepidotus (Inland taipan)).